The primary structure comprises 197 residues: Autophagy-related protein 33 (197 aa).

3 helical membrane-spanning segments follow: residues 10-30 (GIAV…SLIT), 52-72 (AATA…FGAP), and 78-98 (PYLL…GCAS). Phosphoserine occurs at positions 127 and 129. The segment covering 135-148 (EDNHASENTPRDGK) has biased composition (basic and acidic residues). A disordered region spans residues 135-154 (EDNHASENTPRDGKPAATTV). Residues 172–192 (LIAATAIAIVGFVQAVIGVYG) form a helical membrane-spanning segment.

It belongs to the ATG33 family.

Its subcellular location is the mitochondrion membrane. In terms of biological role, involved in the selective degradation of mitochondria via autophagy during starvation and at post-log phase. This Saccharomyces cerevisiae (strain ATCC 204508 / S288c) (Baker's yeast) protein is Autophagy-related protein 33 (ATG33).